The primary structure comprises 185 residues: Ribosome-recycling factor (185 aa).

The protein belongs to the RRF family.

The protein localises to the cytoplasm. In terms of biological role, responsible for the release of ribosomes from messenger RNA at the termination of protein biosynthesis. May increase the efficiency of translation by recycling ribosomes from one round of translation to another. In Listeria monocytogenes serotype 4a (strain HCC23), this protein is Ribosome-recycling factor.